Here is a 775-residue protein sequence, read N- to C-terminus: MKRSGTLRLLSDLSAFGGAARLRELVAGDSAVRVRGSPDGRHLLLLRPPGAVAPQLLVASRGPGAELERAWPAGQPSPLDAFFLPWPARPALVLVWESGLAEVWGAGVGPGWRPLQSTELCPGGGARVVAVAALRGRLVWCEERQARAEGPSGSPAAAFSHCVCVRTLEPSGEASTSLGRTHVLLHHCPAFGLLASCRQLFLVPTATTWPGVAHVLLIWSPGKGKVMVAAPRLGLSYSKSLNPGRGDTWDFRTLLRGLPGLLSPREPLAVHTWAPTPQGLLLLDFGGTVSLLQSHGGTRAVGTLQEAPVGPWGSAALGTFQGTLACVLGSTLELLDMGSGQLLERKVLSTDRVHLLEPPAPGMEDEEELETRGNLRLLSALGLFCVGWEAPQGVELPSAKDLVFEEACGYYQRRSLRGAQLTPEELRHSSTFRAPQALASILQGHLPPSALLTMLRTELRDYRGLEQLKAQLVAGDDEEAGWTELAEQEVARLLRTELIGDQLAQLNTVFQALPTAAWGATLRALQLQLDGNGKLRSQAPPDVWKKVLGGITAGKEPPNGILPPFELLCQCLCQLEPRWLPPFVELAQQQGGPGWGAGGPGLPLYRRALAVLGEEGTRPEALELELLLSSGRPKAVLQAVGQLVQKEQWDRALDAGLALGPSSPLLRSEIFKLLLAEFAQHRRLDAHLPLLCRLCPPELAPAELLLLLRTYLPDEVGPPTPFPEPGAEPPLTVGLLKALLEQTGAQGWLSGPVLSPYEDILWDPSTPPPTPPRDL.

Component of the biogenesis of lysosome-related organelles complex-2 (or BLOC2) composed of HPS3, HPS5 and HPS6. Interacts with HPS5 and HPS3. Interacts with biogenesis of lysosome-related organelles complex-1 (BLOC1). Interacts with AP-3 complex. Interacts with MNAT1. Interacts with DCTN1 and dynein intermediate chain. As to expression, ubiquitous.

Its subcellular location is the microsome membrane. It is found in the cytoplasm. It localises to the cytosol. The protein resides in the early endosome membrane. The protein localises to the lysosome membrane. Functionally, may regulate the synthesis and function of lysosomes and of highly specialized organelles, such as melanosomes and platelet dense granules. Acts as a cargo adapter for the dynein-dynactin motor complex to mediate the transport of lysosomes from the cell periphery to the perinuclear region. Facilitates retrograde lysosomal trafficking by linking the motor complex to lysosomes, and perinuclear positioning of lysosomes is crucial for the delivery of endocytic cargos to lysosomes, for lysosome maturation and functioning. The chain is BLOC-2 complex member HPS6 (HPS6) from Homo sapiens (Human).